A 375-amino-acid chain; its full sequence is Chaperone protein DnaJ (375 aa).

The 66-residue stretch at 5–70 (DYYELLGISR…EKRAAYDQYG (66 aa)) folds into the J domain. A CR-type zinc finger spans residues 132–210 (GTTKDIKIHT…CHGDGRVNKA (79 aa)). Positions 145, 148, 162, 165, 184, 187, 198, and 201 each coordinate Zn(2+). 4 CXXCXGXG motif repeats span residues 145–152 (CDTCHGTG), 162–169 (CPHCHGAG), 184–191 (CHFCHGTG), and 198–205 (CKTCHGDG).

Belongs to the DnaJ family. In terms of assembly, homodimer. Zn(2+) serves as cofactor.

It localises to the cytoplasm. Functionally, participates actively in the response to hyperosmotic and heat shock by preventing the aggregation of stress-denatured proteins and by disaggregating proteins, also in an autonomous, DnaK-independent fashion. Unfolded proteins bind initially to DnaJ; upon interaction with the DnaJ-bound protein, DnaK hydrolyzes its bound ATP, resulting in the formation of a stable complex. GrpE releases ADP from DnaK; ATP binding to DnaK triggers the release of the substrate protein, thus completing the reaction cycle. Several rounds of ATP-dependent interactions between DnaJ, DnaK and GrpE are required for fully efficient folding. Also involved, together with DnaK and GrpE, in the DNA replication of plasmids through activation of initiation proteins. This is Chaperone protein DnaJ from Aggregatibacter actinomycetemcomitans (Actinobacillus actinomycetemcomitans).